The following is a 141-amino-acid chain: Large ribosomal subunit protein uL11 (141 aa).

This sequence belongs to the universal ribosomal protein uL11 family. As to quaternary structure, part of the ribosomal stalk of the 50S ribosomal subunit. Interacts with L10 and the large rRNA to form the base of the stalk. L10 forms an elongated spine to which L12 dimers bind in a sequential fashion forming a multimeric L10(L12)X complex. Post-translationally, one or more lysine residues are methylated.

Functionally, forms part of the ribosomal stalk which helps the ribosome interact with GTP-bound translation factors. This Pseudothermotoga lettingae (strain ATCC BAA-301 / DSM 14385 / NBRC 107922 / TMO) (Thermotoga lettingae) protein is Large ribosomal subunit protein uL11.